The following is a 348-amino-acid chain: L-threonine 3-dehydrogenase (348 aa).

Cys38 is a binding site for Zn(2+). Residues Thr40 and His43 each act as charge relay system in the active site. Residues His63, Glu64, Cys93, Cys96, Cys99, and Cys107 each contribute to the Zn(2+) site. NAD(+) is bound by residues Ile175, Asp195, Arg200, 263–265 (LGI), and 287–288 (IY).

Belongs to the zinc-containing alcohol dehydrogenase family. In terms of assembly, homotetramer. Requires Zn(2+) as cofactor.

Its subcellular location is the cytoplasm. It carries out the reaction L-threonine + NAD(+) = (2S)-2-amino-3-oxobutanoate + NADH + H(+). Its pathway is amino-acid degradation; L-threonine degradation via oxydo-reductase pathway; glycine from L-threonine: step 1/2. Functionally, catalyzes the NAD(+)-dependent oxidation of L-threonine to 2-amino-3-ketobutyrate. In Deinococcus radiodurans (strain ATCC 13939 / DSM 20539 / JCM 16871 / CCUG 27074 / LMG 4051 / NBRC 15346 / NCIMB 9279 / VKM B-1422 / R1), this protein is L-threonine 3-dehydrogenase.